The following is a 597-amino-acid chain: Elongation factor 4 (597 aa).

One can recognise a tr-type G domain in the interval 2 to 184 (KNIRNFSIIA…EIVHKIPAPE (183 aa)). GTP contacts are provided by residues 14–19 (DHGKST) and 131–134 (NKID).

The protein belongs to the TRAFAC class translation factor GTPase superfamily. Classic translation factor GTPase family. LepA subfamily.

It localises to the cell inner membrane. It catalyses the reaction GTP + H2O = GDP + phosphate + H(+). Functionally, required for accurate and efficient protein synthesis under certain stress conditions. May act as a fidelity factor of the translation reaction, by catalyzing a one-codon backward translocation of tRNAs on improperly translocated ribosomes. Back-translocation proceeds from a post-translocation (POST) complex to a pre-translocation (PRE) complex, thus giving elongation factor G a second chance to translocate the tRNAs correctly. Binds to ribosomes in a GTP-dependent manner. The chain is Elongation factor 4 from Actinobacillus succinogenes (strain ATCC 55618 / DSM 22257 / CCUG 43843 / 130Z).